The sequence spans 119 residues: Autophagy-related protein 8C-like (119 aa).

The Phosphatidylethanolamine amidated glycine moiety is linked to residue G117. A propeptide spans 118-119 (removed in mature form); sequence SF.

It belongs to the ATG8 family. In terms of assembly, interacts with ATG4. Interacts with the Phytophtora infestans effector PexRD54. Interacts with JOKA2. Post-translationally, the C-terminal 2 residues are removed by ATG4 to expose Gly-117 at the C-terminus. The C-terminal Gly is then amidated with phosphatidylethanolamine by an activating system similar to that for ubiquitin. The phosphatidylethanolamine amidated glycine is required for autophagosome formation.

The protein localises to the cytoplasmic vesicle. It is found in the autophagosome membrane. The protein resides in the vacuole membrane. It localises to the cytoplasm. Its subcellular location is the cytoskeleton. Its function is as follows. Ubiquitin-like modifier involved in autophagosomes formation. May mediate the delivery of the autophagosomes to the vacuole via the microtubule cytoskeleton. ATG8CL-mediated selective autophagy contributes to defense against the fungal pathogen Phytophtora infestans. This chain is Autophagy-related protein 8C-like, found in Solanum tuberosum (Potato).